The primary structure comprises 66 residues: U10-theraphotoxin-Cg1a 2 (66 aa).

Residues 1–21 form the signal peptide; it reads MKTSVLFVIFGLALLLCLSFA. Residues 22 to 29 constitute a propeptide that is removed on maturation; it reads AELEDTGR. 3 cysteine pairs are disulfide-bonded: cysteine 31–cysteine 46, cysteine 38–cysteine 51, and cysteine 45–cysteine 58.

The protein belongs to the neurotoxin 10 (Hwtx-1) family. 29 (Jztx-13) subfamily. As to expression, expressed by the venom gland.

The protein resides in the secreted. Probable ion channel inhibitor. This is U10-theraphotoxin-Cg1a 2 from Chilobrachys guangxiensis (Chinese earth tiger tarantula).